The following is a 298-amino-acid chain: Apolipoprotein E (298 aa).

The first 18 residues, 1–18 (MKVLWAALVVTLLAGCQA), serve as a signal peptide directing secretion. A run of 6 repeats spans residues 74-95 (LLME…QELA), 96-117 (PMAE…SRLR), 118-139 (ADME…TMMG), 140-161 (QSGE…KRLL), 162-183 (RDVE…EGAE), and 223-244 (GRLE…EQME). The segment at 74–244 (LLMEDTMKEV…RLEEVREQME (171 aa)) is 8 X 22 AA approximate tandem repeats. Met-137 is subject to Methionine sulfoxide. Ser-141 carries the phosphoserine modification. Positions 152 to 162 (HLRKLRKRLLR) are LDL and other lipoprotein receptors binding. 156 to 159 (LRKR) contacts heparin. A lipid-binding and lipoprotein association region spans residues 204 to 272 (SLPSQPLRER…SWFEPMMEDM (69 aa)). 218–225 (GEQMRGRL) serves as a coordination point for heparin. Residues 260–272 (RFKSWFEPMMEDM) form a specificity for association with VLDL region.

It belongs to the apolipoprotein A1/A4/E family. Homotetramer. May interact with ABCA1; functionally associated with ABCA1 in the biogenesis of HDLs. May interact with APP/A4 amyloid-beta peptide; the interaction is extremely stable in vitro but its physiological significance is unclear. May interact with MAPT. May interact with MAP2. In the cerebrospinal fluid, interacts with secreted SORL1. Interacts with PMEL; this allows the loading of PMEL luminal fragment on ILVs to induce fibril nucleation. Post-translationally, APOE exists as multiple glycosylated and sialylated glycoforms within cells and in plasma. The extent of glycosylation and sialylation are tissue and context specific. Glycated in plasma VLDL. In terms of processing, phosphorylated by FAM20C in the extracellular medium.

Its subcellular location is the secreted. It localises to the extracellular space. The protein resides in the extracellular matrix. The protein localises to the extracellular vesicle. It is found in the endosome. Its subcellular location is the multivesicular body. Its function is as follows. APOE is an apolipoprotein, a protein associating with lipid particles, that mainly functions in lipoprotein-mediated lipid transport between organs via the plasma and interstitial fluids. APOE is a core component of plasma lipoproteins and is involved in their production, conversion and clearance. Apolipoproteins are amphipathic molecules that interact both with lipids of the lipoprotein particle core and the aqueous environment of the plasma. As such, APOE associates with chylomicrons, chylomicron remnants, very low density lipoproteins (VLDL) and intermediate density lipoproteins (IDL) but shows a preferential binding to high-density lipoproteins (HDL). It also binds a wide range of cellular receptors including the LDL receptor/LDLR, the LDL receptor-related proteins LRP1, LRP2 and LRP8 and the very low-density lipoprotein receptor/VLDLR that mediate the cellular uptake of the APOE-containing lipoprotein particles. Finally, APOE also has a heparin-binding activity and binds heparan-sulfate proteoglycans on the surface of cells, a property that supports the capture and the receptor-mediated uptake of APOE-containing lipoproteins by cells. A main function of APOE is to mediate lipoprotein clearance through the uptake of chylomicrons, VLDLs, and HDLs by hepatocytes. APOE is also involved in the biosynthesis by the liver of VLDLs as well as their uptake by peripheral tissues ensuring the delivery of triglycerides and energy storage in muscle, heart and adipose tissues. By participating in the lipoprotein-mediated distribution of lipids among tissues, APOE plays a critical role in plasma and tissues lipid homeostasis. APOE is also involved in two steps of reverse cholesterol transport, the HDLs-mediated transport of cholesterol from peripheral tissues to the liver, and thereby plays an important role in cholesterol homeostasis. First, it is functionally associated with ABCA1 in the biogenesis of HDLs in tissues. Second, it is enriched in circulating HDLs and mediates their uptake by hepatocytes. APOE also plays an important role in lipid transport in the central nervous system, regulating neuron survival and sprouting. This is Apolipoprotein E (APOE) from Dasyprocta punctata (Central American agouti).